A 121-amino-acid polypeptide reads, in one-letter code: Large ribosomal subunit protein uL24 (121 aa).

Belongs to the universal ribosomal protein uL24 family. As to quaternary structure, part of the 50S ribosomal subunit.

In terms of biological role, one of two assembly initiator proteins, it binds directly to the 5'-end of the 23S rRNA, where it nucleates assembly of the 50S subunit. Located at the polypeptide exit tunnel on the outside of the subunit. This Pyrococcus abyssi (strain GE5 / Orsay) protein is Large ribosomal subunit protein uL24.